The primary structure comprises 477 residues: UDP-N-acetylmuramate--L-alanine ligase (477 aa).

122–128 (GTHGKTT) contacts ATP.

It belongs to the MurCDEF family.

The protein localises to the cytoplasm. It catalyses the reaction UDP-N-acetyl-alpha-D-muramate + L-alanine + ATP = UDP-N-acetyl-alpha-D-muramoyl-L-alanine + ADP + phosphate + H(+). The protein operates within cell wall biogenesis; peptidoglycan biosynthesis. Functionally, cell wall formation. In Xanthomonas axonopodis pv. citri (strain 306), this protein is UDP-N-acetylmuramate--L-alanine ligase.